The chain runs to 379 residues: Deoxyhypusine synthase (379 aa).

Residues 108 to 112, 134 to 136, Glu-140, and Asp-257 each bind NAD(+); these read SNLIS and TAG. 139–140 serves as a coordination point for spermidine; that stretch reads EE. Asp-262 serves as a coordination point for spermidine. Gly-304 lines the NAD(+) pocket. His-309 serves as a coordination point for spermidine. Residue 329-330 coordinates NAD(+); it reads TG. Residues 335 to 337 and 344 to 350 contribute to the spermidine site; these read GSD and EAVSWGK. Lys-350 acts as the Nucleophile in catalysis. 363–364 is an NAD(+) binding site; sequence DA.

Belongs to the deoxyhypusine synthase family. NAD(+) is required as a cofactor.

The catalysed reaction is [eIF5A protein]-L-lysine + spermidine = [eIF5A protein]-deoxyhypusine + propane-1,3-diamine. Its pathway is protein modification; eIF5A hypusination. In terms of biological role, catalyzes the NAD-dependent oxidative cleavage of spermidine and the subsequent transfer of the butylamine moiety of spermidine to the epsilon-amino group of a specific lysine residue of the eIF-5A precursor protein to form the intermediate deoxyhypusine residue. The polypeptide is Deoxyhypusine synthase (DYS1) (Kluyveromyces lactis (strain ATCC 8585 / CBS 2359 / DSM 70799 / NBRC 1267 / NRRL Y-1140 / WM37) (Yeast)).